Consider the following 634-residue polypeptide: Chaperone protein HtpG (634 aa).

The interval 1 to 342 (MTVETQKETL…SNDLSLNVSR (342 aa)) is a; substrate-binding. The tract at residues 343–559 (EILQKDPIID…EQDLGLQMRQ (217 aa)) is b. The interval 560 to 634 (ILEASGQKVP…LNKLLVELSA (75 aa)) is c.

This sequence belongs to the heat shock protein 90 family. In terms of assembly, homodimer.

It localises to the cytoplasm. In terms of biological role, molecular chaperone. Has ATPase activity. The sequence is that of Chaperone protein HtpG from Pseudomonas putida (strain ATCC 47054 / DSM 6125 / CFBP 8728 / NCIMB 11950 / KT2440).